A 275-amino-acid polypeptide reads, in one-letter code: Putative acyl-[acyl-carrier-protein] desaturase DesA2 (275 aa).

The Fe cation site is built by Glu107, His110, Glu159, Glu189, and His192.

This sequence belongs to the fatty acid desaturase type 2 family. In terms of assembly, homodimer. Fe(2+) is required as a cofactor.

It participates in lipid metabolism; fatty acid metabolism. In terms of biological role, may be a desaturase involved in mycobacterial fatty acid biosynthesis. The sequence is that of Putative acyl-[acyl-carrier-protein] desaturase DesA2 (desA2) from Mycobacterium tuberculosis (strain CDC 1551 / Oshkosh).